Reading from the N-terminus, the 271-residue chain is Phosphate import ATP-binding protein PstB 1 (271 aa).

An ABC transporter domain is found at 24–266; that stretch reads MIGKDVSVYY…PDDPRTQDYI (243 aa). Residue 56-63 participates in ATP binding; it reads GPSGCGKS.

The protein belongs to the ABC transporter superfamily. Phosphate importer (TC 3.A.1.7) family. The complex is composed of two ATP-binding proteins (PstB), two transmembrane proteins (PstC and PstA) and a solute-binding protein (PstS).

The protein localises to the cell inner membrane. It carries out the reaction phosphate(out) + ATP + H2O = ADP + 2 phosphate(in) + H(+). Its function is as follows. Part of the ABC transporter complex PstSACB involved in phosphate import. Responsible for energy coupling to the transport system. In Rhizobium johnstonii (strain DSM 114642 / LMG 32736 / 3841) (Rhizobium leguminosarum bv. viciae), this protein is Phosphate import ATP-binding protein PstB 1.